An 88-amino-acid chain; its full sequence is MANIKSAKKRIKVIKTKTLRNKIIKSSLKTTIKKFLAAVESGNVEEAKVSFTATVKALDMAASKGVIHKNKASRNKSKLALKLNKLTA.

This sequence belongs to the bacterial ribosomal protein bS20 family.

Functionally, binds directly to 16S ribosomal RNA. This chain is Small ribosomal subunit protein bS20, found in Clostridium kluyveri (strain NBRC 12016).